The chain runs to 234 residues: 1-(5-phosphoribosyl)-5-[(5-phosphoribosylamino)methylideneamino] imidazole-4-carboxamide isomerase (234 aa).

D9 serves as the catalytic Proton acceptor. D131 acts as the Proton donor in catalysis.

Belongs to the HisA/HisF family.

The protein localises to the cytoplasm. The enzyme catalyses 1-(5-phospho-beta-D-ribosyl)-5-[(5-phospho-beta-D-ribosylamino)methylideneamino]imidazole-4-carboxamide = 5-[(5-phospho-1-deoxy-D-ribulos-1-ylimino)methylamino]-1-(5-phospho-beta-D-ribosyl)imidazole-4-carboxamide. It functions in the pathway amino-acid biosynthesis; L-histidine biosynthesis; L-histidine from 5-phospho-alpha-D-ribose 1-diphosphate: step 4/9. The polypeptide is 1-(5-phosphoribosyl)-5-[(5-phosphoribosylamino)methylideneamino] imidazole-4-carboxamide isomerase (Staphylococcus aureus (strain NCTC 8325 / PS 47)).